Here is a 182-residue protein sequence, read N- to C-terminus: Plasmolipin (182 aa).

A disordered region spans residues 1 to 20 (MAEFPSKVNTRTSSPAQGGG). At 1-35 (MAEFPSKVNTRTSSPAQGGGAVVSTLSPDLGFVRS) the chain is on the cytoplasmic side. Over residues 7–16 (KVNTRTSSPA) the composition is skewed to polar residues. The MARVEL domain maps to 32-166 (FVRSSLGALM…SAFLSFQAWR (135 aa)). The chain crosses the membrane as a helical span at residues 36–56 (SLGALMLLQLVLGLLVWALIA). Residues 57 to 68 (DTPYHLYPSYGW) are Extracellular-facing. The chain crosses the membrane as a helical span at residues 69-89 (VMFVAVFLWLVTIIFFVLYLF). The Cytoplasmic portion of the chain corresponds to 90–99 (QLHMKLYMVP). A helical transmembrane segment spans residues 100–120 (WPLVLMVFNVGATVLYITAFI). Residues 121 to 141 (TCSASVELTSLKGSQPYNQRA) are Extracellular-facing. Residues 142-162 (AASFFSCLVMIAYGVSAFLSF) traverse the membrane as a helical segment. Residues 163–182 (QAWRGVGSNAATSQMAGGYA) lie on the Cytoplasmic side of the membrane.

The protein belongs to the MAL family. In terms of assembly, forms oligomers. Phosphorylated.

It is found in the cell membrane. The protein localises to the myelin membrane. The protein resides in the apical cell membrane. Main component of the myelin sheath that plays an important role in myelin membrane biogenesis and myelination. Plays an essential function in apical endocytosis. Regulates epithelial development through the regulation of apical endocytosis. Part of the intracellular machinery that mediates basolateral-to-apical transport of ICAM-1, an essential adhesion receptor in epithelial cells, from the subapical compartment in hepatic epithelial cells. This is Plasmolipin (PLLP) from Bos taurus (Bovine).